The following is a 68-amino-acid chain: Small ribosomal subunit protein bS21 (68 aa).

The span at 37–49 (EKPSEKRAREKAA) shows a compositional bias: basic and acidic residues. Positions 37–68 (EKPSEKRAREKAAAVRRARKMERKRMERDGIK) are disordered. The span at 50-59 (AVRRARKMER) shows a compositional bias: basic residues.

The protein belongs to the bacterial ribosomal protein bS21 family.

The chain is Small ribosomal subunit protein bS21 from Erythrobacter litoralis (strain HTCC2594).